Here is a 234-residue protein sequence, read N- to C-terminus: Glycerol uptake facilitator protein (234 aa).

6 helical membrane passes run 9 to 29 (FLGTLILILLGNGVVAGVVLP), 37 to 57 (GWIVITMGWGIAVAVAVFVSG), 61 to 81 (PAYLNPAVTIGVALKGGLPWA), 83 to 103 (VLPYILAQFAGAMLGQILVWL), 135 to 155 (LISEILGTFVLVLTIFALGLY), and 159 to 179 (AGIGTFAVGTLIVGIGLSLGG). An NPA 1 motif is present at residues 65–67 (NPA). The NPA 2 motif lies at 186-188 (NPA). The chain crosses the membrane as a helical span at residues 214-234 (WIPVVGPVIGAALAVLVFSLF).

This sequence belongs to the MIP/aquaporin (TC 1.A.8) family.

The protein resides in the cell membrane. The enzyme catalyses glycerol(in) = glycerol(out). In terms of biological role, mediates glycerol diffusion across the cytoplasmic membrane via a pore-type mechanism. In Streptococcus pneumoniae serotype 4 (strain ATCC BAA-334 / TIGR4), this protein is Glycerol uptake facilitator protein (glpF).